A 507-amino-acid chain; its full sequence is Peroxisomal catalase (507 aa).

Active-site residues include histidine 65 and asparagine 138. Tyrosine 348 lines the heme pocket. The Microbody targeting signal motif lies at 505 to 507 (SKI).

The protein belongs to the catalase family. As to quaternary structure, homotetramer. Heme is required as a cofactor.

The protein resides in the peroxisome matrix. The enzyme catalyses 2 H2O2 = O2 + 2 H2O. Its function is as follows. Catalyzes the degradation of hydrogen peroxide (H(2)O(2)) generated by peroxisomal oxidases to water and oxygen, thereby protecting cells from the toxic effects of hydrogen peroxide. This chain is Peroxisomal catalase (PXP9), found in Pichia angusta (Yeast).